A 555-amino-acid polypeptide reads, in one-letter code: Formate--tetrahydrofolate ligase (555 aa).

Position 65–72 (65–72 (TPAGEGKS)) interacts with ATP.

The protein belongs to the formate--tetrahydrofolate ligase family.

The enzyme catalyses (6S)-5,6,7,8-tetrahydrofolate + formate + ATP = (6R)-10-formyltetrahydrofolate + ADP + phosphate. The protein operates within one-carbon metabolism; tetrahydrofolate interconversion. The chain is Formate--tetrahydrofolate ligase from Staphylococcus carnosus (strain TM300).